We begin with the raw amino-acid sequence, 424 residues long: CinA-like protein (424 aa).

The protein belongs to the CinA family.

The chain is CinA-like protein from Shewanella frigidimarina (strain NCIMB 400).